Consider the following 402-residue polypeptide: Clusterin-associated protein 1 (402 aa).

Residues 187–297 (KTKDLLNNVA…KEEEKRLLKS (111 aa)) are a coiled coil. Residues 292 to 402 (KRLLKSGSND…EPLDESDNDF (111 aa)) are disordered. Acidic residues-rich tracts occupy residues 301-317 (DDSDIDIQEDDESDSEL) and 349-377 (DSDEDEDSEDSEMNMEDDEEDDDDLEDES). Residues Ser303, Ser313, and Ser315 each carry the phosphoserine modification. Ser398 carries the post-translational modification Phosphoserine.

It belongs to the CLUAP1 family. As to quaternary structure, interacts with CLU/clusterin. Interacts with UBXN10; the interaction is direct.

Its subcellular location is the cell projection. It localises to the cilium. The protein localises to the nucleus. Required for cilia biogenesis. Appears to function within the multiple intraflagellar transport complex B (IFT-B). Key regulator of hedgehog signaling. This chain is Clusterin-associated protein 1 (Cluap1), found in Rattus norvegicus (Rat).